We begin with the raw amino-acid sequence, 1257 residues long: MASVCGTPSPGGALGSPAPAWYHRDLSRAAAEELLARAGRDGSFLVRDSESVAGAFALCVLYQKHVHTYRILPDGEDFLAVQTSQGVPVRRFQTLGELIGLYAQPNQGLVCALLLPVEGEREPDPPDDRDASDVEDEKPPLPPRSGSTSISAPVGPSSPLPTPETPTTPAAESTPNGLSTVSHEYLKGSYGLDLEAVRGGASNLPHLTRTLVTSCRRLHSEVDKVLSGLEILSKVFDQQSSPMVTRLLQQQSLPQTGEQELESLVLKLSVLKDFLSGIQKKALKALQDMSSTAPPAPLQPSIRKAKTIPVQAFEVKLDVTLGDLTKIGKSQKFTLSVDVEGGRLVLLRRQRDSQEDWTTFTHDRIRQLIKSQRVQNKLGVVFEKEKDRTQRKDFIFVSARKREAFCQLLQLMKNRHSKQDEPDMISVFIGTWNMGSVPPPKNVTSWFTSKGLGKALDEVTVTIPHDIYVFGTQENSVGDREWLDLLRGGLKELTDLDYRPIAMQSLWNIKVAVLVKPEHENRISHVSTSSVKTGIANTLGNKGAVGVSFMFNGTSFGFVNCHLTSGNEKTTRRNQNYLDILRLLSLGDRQLSAFDISLRFTHLFWFGDLNYRLDMDIQEILNYISRREFEPLLRVDQLNLEREKHKVFLRFSEEEISFPPTYRYERGSRDTYAWHKQKPTGVRTNVPSWCDRILWKSYPETHIICNSYGCTDDIVTSDHSPVFGTFEVGVTSQFISKKGLSKTSDQAYIEFESIEAIVKTASRTKFFIEFYSTCLEEYKKSFENDAQSSDNINFLKVQWSSRQLPTLKPILADIEYLQDQHLLLTVKSMDGYESYGECVVALKSMIGSTAQQFLTFLSHRGEETGNIRGSMKVRVPTERLGTRERLYEWISIDKDDTGAKSKVPSVSRGSQEHRSGSRKPASTETSCPLSKLFEEPEKPPPTGRPPAPPRAVPREEPLNPRLKSEGTSEQEGVAAPPPKNSFNNPAYYVLEGVPHQLLPLEPPSLARAPLPPATKNKVAITVPAPQLGRHRTPRVGEGSSSDEDSGGTLPPPDFPPPPLPDSAIFLPPNLDPLSMPVVRGRSGGEARGPPPPKAHPRPPLPPGTSPASTFLGEVASGDDRSCSVLQMAKTLSEVDYAPGPGRSALLPNPLELQPPRGPSDYGRPLSFPPPRIRESIQEDLAEEAPCPQGGRASGLGEAGMGAWLRAIGLERYEEGLVHNGWDDLEFLSDITEEDLEEAGVQDPAHKRLLLDTLQLSK.

The 97-residue stretch at 21–117 (WYHRDLSRAA…GLVCALLLPV (97 aa)) folds into the SH2 domain. Positions 119–132 (GEREPDPPDDRDAS) are enriched in basic and acidic residues. Residues 119–181 (GEREPDPPDD…ESTPNGLSTV (63 aa)) are disordered. Residue Ser-132 is modified to Phosphoserine. The span at 156–166 (PSSPLPTPETP) shows a compositional bias: pro residues. Phosphothreonine is present on Thr-165. Phosphoserine occurs at positions 241 and 353. The residue at position 887 (Tyr-887) is a Phosphotyrosine. Ser-891 carries the post-translational modification Phosphoserine. The interval 897-986 (TGAKSKVPSV…PPKNSFNNPA (90 aa)) is disordered. Residues 939–951 (PPPTGRPPAPPRA) are compositionally biased toward pro residues. Positions 945 to 950 (PPAPPR) match the SH3-binding motif. Positions 952–966 (VPREEPLNPRLKSEG) are enriched in basic and acidic residues. Residues 984–987 (NPAY) carry the NPXY motif motif. A Phosphotyrosine modification is found at Tyr-987. The span at 999–1008 (PLEPPSLARA) shows a compositional bias: low complexity. The disordered stretch occupies residues 999 to 1119 (PLEPPSLARA…FLGEVASGDD (121 aa)). Composition is skewed to pro residues over residues 1049-1060 (LPPPDFPPPPLP) and 1088-1104 (GPPP…PPGT). Ser-1132 carries the post-translational modification Phosphoserine. Residues 1134–1196 (VDYAPGPGRS…PQGGRASGLG (63 aa)) are disordered. Residues Tyr-1136 and Tyr-1161 each carry the phosphotyrosine modification. Residues 1195-1257 (LGEAGMGAWL…LLLDTLQLSK (63 aa)) form the SAM domain. Ser-1256 carries the post-translational modification Phosphoserine.

This sequence belongs to the inositol 1,4,5-trisphosphate 5-phosphatase family. Interacts with tyrosine phosphorylated form of SHC1. Interacts with EGFR. Upon stimulation by the EGF signaling pathway, it forms a complex with SHC1 and EGFR. Interacts with cytoskeletal protein SORBS3/vinexin, promoting its localization to the periphery of cells. Forms a complex with filamin (FLNA or FLNB), actin, GPIb (GP1BA or GP1BB) that regulates cortical and submembraneous actin. Interacts with c-Met/MET, when c-Met/MET is phosphorylated on 'Tyr-1356'. Interacts with p130Cas/BCAR1. Interacts with CENTD3/ARAP3 via its SAM domain. Interacts with c-Cbl/CBL and CAP/SORBS1. Interacts with activated EPHA2 receptor. Interacts with receptors FCGR2A. Interacts with FCGR2B. Interacts with tyrosine kinase ABL1. Interacts with tyrosine kinase TEC. Interacts with CSF1R. Interacts (via N-terminus) with SH3YL1 (via SH3 domain). Interacts (via SH2 domain) with tyrosine phosphorylated KLRC1 (via ITIM). Interacts with NEDD9/HEF1. In terms of processing, tyrosine phosphorylated by the members of the SRC family after exposure to a diverse array of extracellular stimuli such as insulin, growth factors such as EGF or PDGF, chemokines, integrin ligands and hypertonic and oxidative stress. May be phosphorylated upon IgG receptor FCGR2B-binding. Phosphorylated at Tyr-987 following cell attachment and spreading. Phosphorylated at Tyr-1161 following EGF signaling pathway stimulation. As to expression, widely expressed.

It localises to the cytoplasm. Its subcellular location is the cytosol. It is found in the cytoskeleton. The protein resides in the membrane. The protein localises to the cell projection. It localises to the filopodium. Its subcellular location is the lamellipodium. It is found in the basal cell membrane. The protein resides in the nucleus. The protein localises to the nucleus speckle. It localises to the spindle pole. The enzyme catalyses a 1,2-diacyl-sn-glycero-3-phospho-(1D-myo-inositol-3,4,5-trisphosphate) + H2O = a 1,2-diacyl-sn-glycero-3-phospho-(1D-myo-inositol-3,4-bisphosphate) + phosphate. It catalyses the reaction 1,2-dioctanoyl-sn-glycero-3-phospho-(1D-myo-inositol-3,4,5-trisphosphate) + H2O = 1,2-dioctanoyl-sn-glycero-3-phospho-(1D-myo-inositol-3,4-bisphosphate) + phosphate. It carries out the reaction 1,2-dihexadecanoyl-sn-glycero-3-phospho-(1D-myo-inositol-3,4,5-trisphosphate) + H2O = 1,2-dihexadecanoyl-sn-glycero-3-phospho-(1D-myo-inositol-3,4-bisphosphate) + phosphate. Activated upon translocation to the sites of synthesis of PtdIns(3,4,5)P3 in the membrane. Enzymatic activity is enhanced in the presence of phosphatidylserine. Its function is as follows. Phosphatidylinositol (PtdIns) phosphatase that specifically hydrolyzes the 5-phosphate of phosphatidylinositol-3,4,5-trisphosphate (PtdIns(3,4,5)P3) to produce PtdIns(3,4)P2, thereby negatively regulating the PI3K (phosphoinositide 3-kinase) pathways. Required for correct mitotic spindle orientation and therefore progression of mitosis. Plays a central role in regulation of PI3K-dependent insulin signaling, although the precise molecular mechanisms and signaling pathways remain unclear. While overexpression reduces both insulin-stimulated MAP kinase and Akt activation, its absence does not affect insulin signaling or GLUT4 trafficking. Confers resistance to dietary obesity. May act by regulating AKT2, but not AKT1, phosphorylation at the plasma membrane. Part of a signaling pathway that regulates actin cytoskeleton remodeling. Required for the maintenance and dynamic remodeling of actin structures as well as in endocytosis, having a major impact on ligand-induced EGFR internalization and degradation. Participates in regulation of cortical and submembraneous actin by hydrolyzing PtdIns(3,4,5)P3 thereby regulating membrane ruffling. Regulates cell adhesion and cell spreading. Required for HGF-mediated lamellipodium formation, cell scattering and spreading. Acts as a negative regulator of EPHA2 receptor endocytosis by inhibiting via PI3K-dependent Rac1 activation. Acts as a regulator of neuritogenesis by regulating PtdIns(3,4,5)P3 level and is required to form an initial protrusive pattern, and later, maintain proper neurite outgrowth. Acts as a negative regulator of the FC-gamma-RIIA receptor (FCGR2A). Mediates signaling from the FC-gamma-RIIB receptor (FCGR2B), playing a central role in terminating signal transduction from activating immune/hematopoietic cell receptor systems. Upon stimulation by EGF, it is recruited by EGFR and dephosphorylates PtdIns(3,4,5)P3. Plays a negative role in regulating the PI3K-PKB pathway, possibly by inhibiting PKB activity. Down-regulates Fc-gamma-R-mediated phagocytosis in macrophages independently of INPP5D/SHIP1. In macrophages, down-regulates NF-kappa-B-dependent gene transcription by regulating macrophage colony-stimulating factor (M-CSF)-induced signaling. Plays a role in the localization of AURKA and NEDD9/HEF1 to the basolateral membrane at interphase in polarized cysts, thereby mediates cell cycle homeostasis, cell polarization and cilia assembly. Additionally promotion of cilia growth is also facilitated by hydrolysis of (PtdIns(3,4,5)P3) to PtdIns(3,4)P2. Promotes formation of apical membrane-initiation sites during the initial stages of lumen formation via Rho family-induced actin filament organization and CTNNB1 localization to cell-cell contacts. May also hydrolyze PtdIns(1,3,4,5)P4, and could thus affect the levels of the higher inositol polyphosphates like InsP6. Involved in endochondral ossification. The polypeptide is Phosphatidylinositol 3,4,5-trisphosphate 5-phosphatase 2 (Mus musculus (Mouse)).